Here is a 299-residue protein sequence, read N- to C-terminus: Circadian clock oscillator protein KaiA (299 aa).

Positions 9–148 (SRPQIFICTL…LQLSKACRLP (140 aa)) are psR domain, binds oxidized quinones. The KaiA N-terminal domain occupies 9–179 (SRPQIFICTL…RLSQKLKERL (171 aa)). A flexible linker region spans residues 180–188 (GYLGVYYKR). Positions 189–297 (NPQQFFHKLT…CEMYRRSIPK (109 aa)) constitute a KaiA C-terminal domain.

As to quaternary structure, homodimer. The KaiABC complex composition changes during the circadian cycle to control KaiC phosphorylation. Complexes KaiC(6), KaiA(2-4):KaiC(6), KaiB(6):KaiC(6) and KaiC(6):KaiB(6):KaiA(12) are among the most important forms, many form cooperatively. KaiA and CikA bind to the same region of the KaiB(fs) form and therefore compete.

Functionally, key component of the KaiABC oscillator complex, which constitutes the main circadian regulator in cyanobacteria. Complex composition changes during the circadian cycle to control KaiC phosphorylation. KaiA stimulates KaiC autophosphorylation, while KaiB sequesters KaiA, leading to KaiC autodephosphorylation. KaiA binding to the KaiC CII domain during the subjective day yields KaiA(2-4):KaiC(6) complexes which stimulate KaiC autophosphorylation. Phospho-Ser-431 KaiC accumulation triggers binding of KaiB during the subjective night to form the KaiB(6):KaiC(6) complex, leading to changes in the output regulators CikA and SasA. KaiB(6):KaiC(6) formation exposes a site for KaiA binding on KaiB that sequesters KaiA from KaiC's CII domain, making the KaiC(6):KaiB(6):KaiA(12) complex resulting in KaiC autodephosphorylation. Complete dephosphorylation of KaiC leads to dissociation of KaiA(2):KaiB(1), completing 1 cycle of the Kai oscillator. In terms of biological role, binds oxidized quinones via the N-terminal PsR domain, allowing it to sense redox changes and possibly mediate clock input. The chain is Circadian clock oscillator protein KaiA from Acaryochloris marina (strain MBIC 11017).